A 454-amino-acid chain; its full sequence is Caspase-9 (454 aa).

The 92-residue stretch at 1-92 (MDEADRQLLR…GTLASLLQSG (92 aa)) folds into the CARD domain. Threonine 163 is modified (phosphothreonine; by MAPK1). At tyrosine 191 the chain carries Phosphotyrosine; by ABL1. Catalysis depends on residues histidine 275 and cysteine 325. Serine 340 and serine 348 each carry phosphoserine. A propeptide spanning residues 354–367 (AVPYQEGPRPLDQL) is cleaved from the precursor.

This sequence belongs to the peptidase C14A family. As to quaternary structure, heterotetramer that consists of two anti-parallel arranged heterodimers, each one formed by a 35 kDa (p35) and a 10 kDa (p10) subunit. Caspase-9 and APAF1 bind to each other via their respective NH2-terminal CED-3 homologous domains in the presence of cytochrome C and ATP. Interacts (inactive form) with EFHD2. Interacts with HAX1. Interacts with BIRC2/c-IAP1, XIAP/BIRC4, BIRC5/survivin, BIRC6/bruce and BIRC7/livin. Interacts with ABL1 (via SH3 domain); the interaction is direct and increased in the response of cells to genotoxic stress and ABL1/c-Abl activation. Interacts with BCL2L10. Cleavages at Asp-353 by granzyme B and at Asp-368 by caspase-3 generate the two active subunits. Caspase-8 and -10 can also be involved in these processing events. In terms of processing, phosphorylated at Thr-163 by MAPK1/ERK2. Phosphorylation at Thr-163 is sufficient to block caspase-9 processing and subsequent caspase-3 activation. Phosphorylation on Tyr-191 by ABL1/c-Abl; occurs in the response of cells to DNA damage. Post-translationally, ubiquitinated by BIRC6; this activity is inhibited by DIABLO/SMAC.

It catalyses the reaction Strict requirement for an Asp residue at position P1 and with a marked preference for His at position P2. It has a preferred cleavage sequence of Leu-Gly-His-Asp-|-Xaa.. Its activity is regulated as follows. Inhibited by BIRC6; following inhibition of BIRC6-caspase binding by DIABLO/SMAC, BIRC6 is subjected to caspase cleavage, leading to an increase in active caspases. Functionally, involved in the activation cascade of caspases responsible for apoptosis execution. Binding of caspase-9 to Apaf-1 leads to activation of the protease which then cleaves and activates effector caspases caspase-3 (CASP3) or caspase-7 (CASP7). Promotes DNA damage-induced apoptosis in a ABL1/c-Abl-dependent manner. Proteolytically cleaves poly(ADP-ribose) polymerase (PARP). Cleaves BIRC6 following inhibition of BIRC6-caspase binding by DIABLO/SMAC. This chain is Caspase-9 (Casp9), found in Mus musculus (Mouse).